A 347-amino-acid polypeptide reads, in one-letter code: tRNA pseudouridine synthase D (347 aa).

The Nucleophile role is filled by D78. In terms of domain architecture, TRUD spans 150 to 304 (GLPNFFGPQR…AEGTRRAARL (155 aa)).

It belongs to the pseudouridine synthase TruD family.

The enzyme catalyses uridine(13) in tRNA = pseudouridine(13) in tRNA. Functionally, responsible for synthesis of pseudouridine from uracil-13 in transfer RNAs. The protein is tRNA pseudouridine synthase D of Anaeromyxobacter dehalogenans (strain 2CP-C).